We begin with the raw amino-acid sequence, 445 residues long: Probable carboxypeptidase UREG_07869 (445 aa).

A signal peptide spans 1-17 (MKSLILTTLALLPLVSC). Position 165 (Asp165) interacts with Zn(2+). Glu197 serves as the catalytic Proton acceptor. Position 198 (Glu198) interacts with Zn(2+).

Belongs to the peptidase M20A family. The cofactor is Zn(2+).

Its subcellular location is the secreted. The polypeptide is Probable carboxypeptidase UREG_07869 (Uncinocarpus reesii (strain UAMH 1704)).